Consider the following 246-residue polypeptide: Proteasome subunit alpha type-6-A (246 aa).

The protein belongs to the peptidase T1A family. Component of the 20S core complex of the 26S proteasome. The 26S proteasome is composed of a core protease (CP), known as the 20S proteasome, capped at one or both ends by the 19S regulatory particle (RP/PA700). The 20S proteasome core is composed of 28 subunits that are arranged in four stacked rings, resulting in a barrel-shaped structure. The two end rings are each formed by seven alpha subunits, and the two central rings are each formed by seven beta subunits. The catalytic chamber with the active sites is on the inside of the barrel. As to expression, ubiquitous low levels, higher expression in siliques and flowers.

It is found in the cytoplasm. The protein resides in the nucleus. The proteasome is a multicatalytic proteinase complex which is characterized by its ability to cleave peptides with Arg, Phe, Tyr, Leu, and Glu adjacent to the leaving group at neutral or slightly basic pH. The proteasome has an ATP-dependent proteolytic activity. The protein is Proteasome subunit alpha type-6-A (PAA1) of Arabidopsis thaliana (Mouse-ear cress).